We begin with the raw amino-acid sequence, 318 residues long: NADH-ubiquinone oxidoreductase chain 1 (318 aa).

A run of 8 helical transmembrane segments spans residues 2–22 (FTIN…FLTL), 70–90 (LYMA…TPLP), 98–118 (FNLG…SILW), 140–160 (ISYG…SGSF), 173–193 (WLLL…LAET), 217–237 (AGSF…MNAL), 253–273 (ELYT…FLWI), and 294–314 (LPLT…LSGI).

It belongs to the complex I subunit 1 family.

It is found in the mitochondrion inner membrane. It carries out the reaction a ubiquinone + NADH + 5 H(+)(in) = a ubiquinol + NAD(+) + 4 H(+)(out). In terms of biological role, core subunit of the mitochondrial membrane respiratory chain NADH dehydrogenase (Complex I) that is believed to belong to the minimal assembly required for catalysis. Complex I functions in the transfer of electrons from NADH to the respiratory chain. The immediate electron acceptor for the enzyme is believed to be ubiquinone. The protein is NADH-ubiquinone oxidoreductase chain 1 (MT-ND1) of Sapajus apella (Brown-capped capuchin).